Here is a 574-residue protein sequence, read N- to C-terminus: Transmembrane protein 108 (574 aa).

The helical transmembrane segment at 9-29 threads the bilayer; it reads YCQLLSFLLTLALTKALVLAV. The interval 31–169 is interaction with SH3GL2; it reads EPSPRESLQT…ATTRRPPRPP (139 aa). Disordered stretches follow at residues 32-352 and 364-417; these read PSPR…SGVF and DATV…PRPL. Residues 58–86 are compositionally biased toward polar residues; the sequence is TRLSSVLTLNPTPDGPSSQAAATLETTVS. The span at 132 to 160 shows a compositional bias: low complexity; the sequence is LPPGDATPTTTLPTKPAGTTSRPTVAPRA. Residues 173–406 form an interaction with DST (isoform 1) region; sequence RKGAGGSTRT…SPAEEEAEAS (234 aa). Over residues 245 to 271 the composition is skewed to polar residues; it reads FSSTQPQTVSPATAPRSTSRVPPTTSL. The span at 292–312 shows a compositional bias: low complexity; it reads TSPGGEPAATAATGAPASTQP. Residues 316–332 are compositionally biased toward polar residues; that stretch reads PSQSPHGDVQDSASHSD. A helical transmembrane segment spans residues 468–488; it reads IAWVIVAISVPISSCSVLLTV. Residues 489 to 574 are interaction with CYFIP2; sequence CCMRRKKKTA…FVGNDQVSEI (86 aa).

As to quaternary structure, interacts with DST (isoform 1). Interacts with SH3GL2. Interacts (via N-terminus) with CYFIP1 and CYFIP2; the interactions associate TMEM108 with the WAVE1 complex. In terms of processing, glycosylated. As to expression, expressed in the nervous system tissues, such as hippocampus and spinal cord, is barely detectable in peripheral tissues such as heart, lung, liver, kidney and muscle. In brain, highly expressed in dentate gyrus neurons and expressed in cortex, olfactory bulb, ammon's horn, cerebellum, hypothalamus and striatum.

The protein resides in the membrane. It localises to the postsynaptic density. The protein localises to the endosome membrane. Its subcellular location is the cell projection. It is found in the axon. The protein resides in the dendrite. It localises to the early endosome. Transmembrane protein required for proper cognitive functions. Involved in the development of dentate gyrus (DG) neuron circuitry, is necessary for AMPA receptors surface expression and proper excitatory postsynaptic currents of DG granule neurons. Regulates the organization and stability of the microtubule network of sensory neurons to allow axonal transport. Through the interaction with DST, mediates the docking of the dynein/dynactin motor complex to vesicle cargos for retrograde axonal transport. In hippocampal neurons, required for BDNF-dependent dendrite outgrowth. Cooperates with SH3GL2 and recruits the WAVE1 complex to facilitate actin-dependent BDNF:NTRK2 early endocytic trafficking and mediate signaling from early endosomes. In Mus musculus (Mouse), this protein is Transmembrane protein 108.